The chain runs to 202 residues: Small ribosomal subunit protein uS4 (202 aa).

A disordered region spans residues 15–42 (LGDLPGLTRKAAKRSYPPGQHGQARRKR). The S4 RNA-binding domain maps to 90-152 (NRLDNVCFRL…KCSKQLAEGN (63 aa)).

This sequence belongs to the universal ribosomal protein uS4 family. In terms of assembly, part of the 30S ribosomal subunit. Contacts protein S5. The interaction surface between S4 and S5 is involved in control of translational fidelity.

Functionally, one of the primary rRNA binding proteins, it binds directly to 16S rRNA where it nucleates assembly of the body of the 30S subunit. Its function is as follows. With S5 and S12 plays an important role in translational accuracy. This chain is Small ribosomal subunit protein uS4, found in Synechococcus sp. (strain WH7803).